The sequence spans 230 residues: Sugar fermentation stimulation protein homolog (230 aa).

The protein belongs to the SfsA family.

In Clostridium botulinum (strain Loch Maree / Type A3), this protein is Sugar fermentation stimulation protein homolog.